Consider the following 112-residue polypeptide: Large ribosomal subunit protein uL1 (112 aa).

Belongs to the universal ribosomal protein uL1 family.

This chain is Large ribosomal subunit protein uL1 (rpl-10a), found in Caenorhabditis remanei (Caenorhabditis vulgaris).